The sequence spans 370 residues: Phospho-N-acetylmuramoyl-pentapeptide-transferase (370 aa).

The next 10 helical transmembrane spans lie at alanine 29 to leucine 49, glycine 70 to tryptophan 90, leucine 93 to phenylalanine 113, lysine 133 to glycine 153, glycine 177 to serine 197, glycine 209 to serine 229, valine 251 to alanine 271, valine 273 to methionine 293, isoleucine 298 to valine 318, and valine 349 to isoleucine 369.

Belongs to the glycosyltransferase 4 family. MraY subfamily. Requires Mg(2+) as cofactor.

The protein resides in the cell inner membrane. The enzyme catalyses UDP-N-acetyl-alpha-D-muramoyl-L-alanyl-gamma-D-glutamyl-meso-2,6-diaminopimeloyl-D-alanyl-D-alanine + di-trans,octa-cis-undecaprenyl phosphate = di-trans,octa-cis-undecaprenyl diphospho-N-acetyl-alpha-D-muramoyl-L-alanyl-D-glutamyl-meso-2,6-diaminopimeloyl-D-alanyl-D-alanine + UMP. It participates in cell wall biogenesis; peptidoglycan biosynthesis. Its function is as follows. Catalyzes the initial step of the lipid cycle reactions in the biosynthesis of the cell wall peptidoglycan: transfers peptidoglycan precursor phospho-MurNAc-pentapeptide from UDP-MurNAc-pentapeptide onto the lipid carrier undecaprenyl phosphate, yielding undecaprenyl-pyrophosphoryl-MurNAc-pentapeptide, known as lipid I. The chain is Phospho-N-acetylmuramoyl-pentapeptide-transferase from Leptospira biflexa serovar Patoc (strain Patoc 1 / Ames).